Reading from the N-terminus, the 553-residue chain is Coiled-coil domain-containing protein 22 homolog (553 aa).

The tract at residues 236-264 (DSEEPAPPPISTVKPDASAEEEASPIQEL) is disordered. 3 coiled-coil regions span residues 261–286 (IQELSDQVEELRVQCETLLAERKAHA), 314–407 (ERTS…QSLA), and 498–549 (NVTK…VEQP).

The protein belongs to the CCDC22 family.

The polypeptide is Coiled-coil domain-containing protein 22 homolog (Drosophila erecta (Fruit fly)).